Reading from the N-terminus, the 581-residue chain is ATP-dependent lipid A-core flippase (581 aa).

6 helical membrane passes run 21 to 41 (TVAIVAIIGMIGYSGMDALFI), 65 to 85 (FVVIALVIGRGVFNFMSSYCL), 138 to 158 (ALLIVVREGAFVVFLLAVMFY), 161 to 181 (WQLSLIFLVIIPLVAVIVTVV), 246 to 266 (LSVSIIQVLAASAMAVILWVV), and 271 to 291 (MIDTISSGDFVVLISSMMMLL). The ABC transmembrane type-1 domain maps to 24–306 (IVAIIGMIGY…LANVNSDMQR (283 aa)). Positions 338–575 (IEVKNVTFKY…NGTYSALCKM (238 aa)) constitute an ABC transporter domain. 372-379 (GRSGSGKS) is an ATP binding site.

Belongs to the ABC transporter superfamily. Lipid exporter (TC 3.A.1.106) family. Homodimer.

Its subcellular location is the cell inner membrane. The enzyme catalyses ATP + H2O + lipid A-core oligosaccharideSide 1 = ADP + phosphate + lipid A-core oligosaccharideSide 2.. In terms of biological role, involved in lipopolysaccharide (LPS) biosynthesis. Translocates lipid A-core from the inner to the outer leaflet of the inner membrane. Transmembrane domains (TMD) form a pore in the inner membrane and the ATP-binding domain (NBD) is responsible for energy generation. The chain is ATP-dependent lipid A-core flippase from Pseudoalteromonas translucida (strain TAC 125).